We begin with the raw amino-acid sequence, 468 residues long: Serine/threonine-protein phosphatase 2A 55 kDa regulatory subunit B beta isoform (468 aa).

7 WD repeats span residues 47-86, 112-153, 196-234, 245-285, 304-342, 359-400, and 435-468; these read SSADIISTVEFNNTGELLATGDKGGRVVIFQREQENKNQP, EIEE…KRPE, AHTYHINSISVNSDYETYMSADDLRINLWNLEITNRSFN, ELTE…LCDK, EIISSISDVKFNHSGRYIMTRDYLTVKVWDLNMENRPIE, ENDC…DVTL, and DFSKKILHTAWHPSENIIAVAATNNLYIFQDKVN.

It belongs to the phosphatase 2A regulatory subunit B family. PP2A consists of a common heterodimeric core enzyme, composed of a 36 kDa catalytic subunit (subunit C) and a 65 kDa constant regulatory subunit (PR65 or subunit A), that associates with a variety of regulatory subunits.

It localises to the cytoplasm. The protein resides in the cytoskeleton. Its subcellular location is the membrane. In terms of biological role, the B regulatory subunit might modulate substrate selectivity and catalytic activity, and might also direct the localization of the catalytic enzyme to a particular subcellular compartment. Negatively controls the initiation of oocyte maturation. The chain is Serine/threonine-protein phosphatase 2A 55 kDa regulatory subunit B beta isoform (ppp2r2b) from Xenopus laevis (African clawed frog).